Here is a 1310-residue protein sequence, read N- to C-terminus: Major viral transcription factor ICP4 homolog (1310 aa).

Disordered regions lie at residues 117-271 (AGAR…GPVE), 285-454 (GAKA…TPII), and 636-697 (GSSP…LLDK). Residues 341–350 (PVEKKPKSRE) show a composition bias toward basic and acidic residues. Low complexity-rich tracts occupy residues 351–364 (FVSSSSSSSSWGSS), 392–407 (PSPSNSDDSDSNDGGS), and 648–666 (PSPTTPATQAPDPQPSAAA). The short motif at 677–685 (RLRTPRKRK) is the Nuclear localization signal element. Phosphoserine; by viral VZV ORF66 is present on residues serine 686 and serine 722. Disordered stretches follow at residues 1193-1258 (GTRF…SFGV) and 1282-1310 (ELLSSSSSSEDEDDVWGGRGGRSPPQSRG). Basic and acidic residues predominate over residues 1217 to 1227 (RTADDREHALE). Residues 1228–1250 (LDDWEVGCEDAWDSEEGGGDDGD) show a composition bias toward acidic residues.

This sequence belongs to the herpesviridae ICP4 family. As to quaternary structure, interacts with IE4 and IE63. Interacts with host USF1 and SP1. Phosphorylated by ORF66 protein kinase on Ser-686 and Ser-722. Also phosphorylated by ORF47 protein kinase and by human CSNK2A1/CKII.

It is found in the host nucleus. Its subcellular location is the host cytoplasm. It localises to the virion tegument. Its function is as follows. Transcriptional transactivator. May interact with and recruit specific components of the general transcription machinery to viral promoters and stabilize their formation for transcription initiation. Negatively regulates its own transcription. This immediate early (EI) protein may be necessary in virion for viral pathogenesis. The chain is Major viral transcription factor ICP4 homolog from Homo sapiens (Human).